Consider the following 513-residue polypeptide: MKQHLVIFDTTLRDGEQSPGASMTKEEKIRVARQLEKMRVDVIEAGFAAASPGDFDAIHSIAQTIKDSTVCSLARANENDIRRAGEAIKPAQSGRIHTFIATSPIHMEKKLRMTPDQVVEQAVKAIGWAREYTDDIEFSAEDAGRSDLDFLCRIFEEVIKAGATTINVPDTVGYNIPSQYAETMRQLIERVPNSDKVVWSVHCHNDLGLAVSNSLAAVLCGARQVECTINGLGERAGNAALEEIVMAVRTRADVFPVETRIDTTQIVPASKLVSQITGYPVQPNKAVVGANAFAHESGIHQDGVLKHRETYEIMRAQDVGWTQNKLVLGKHSGRNAFKNRLQELGIELESDEALNAAFARFKELADKKHEIFDEDLHALVSDDLVTPDQEYYKLVYSRVCSETGEMPRASVILNIGGVEHKAEADGGGPVDATFKAIESIAGSGAELLLYSVNAITTGTDAQGEVTTRLSKGDRIVNGNGADTDIVIASARSYLNALNKLHSTLDKVKAQGGV.

Residues Leu-5–Val-267 form the Pyruvate carboxyltransferase domain. Mn(2+) contacts are provided by Asp-14, His-202, His-204, and Asn-238. A regulatory domain region spans residues Lys-393 to Val-513.

It belongs to the alpha-IPM synthase/homocitrate synthase family. LeuA type 1 subfamily. As to quaternary structure, homodimer. It depends on Mn(2+) as a cofactor.

It localises to the cytoplasm. It catalyses the reaction 3-methyl-2-oxobutanoate + acetyl-CoA + H2O = (2S)-2-isopropylmalate + CoA + H(+). The protein operates within amino-acid biosynthesis; L-leucine biosynthesis; L-leucine from 3-methyl-2-oxobutanoate: step 1/4. Functionally, catalyzes the condensation of the acetyl group of acetyl-CoA with 3-methyl-2-oxobutanoate (2-ketoisovalerate) to form 3-carboxy-3-hydroxy-4-methylpentanoate (2-isopropylmalate). The sequence is that of 2-isopropylmalate synthase from Dechloromonas aromatica (strain RCB).